Here is a 331-residue protein sequence, read N- to C-terminus: Probable tRNA pseudouridine synthase B (331 aa).

Aspartate 66 serves as the catalytic Nucleophile. One can recognise a PUA domain in the interval 233–307; the sequence is INKIIVKDSA…NEEDNREKYK (75 aa).

It belongs to the pseudouridine synthase TruB family. Type 2 subfamily.

The enzyme catalyses uridine(55) in tRNA = pseudouridine(55) in tRNA. Functionally, could be responsible for synthesis of pseudouridine from uracil-55 in the psi GC loop of transfer RNAs. This is Probable tRNA pseudouridine synthase B from Methanococcus aeolicus (strain ATCC BAA-1280 / DSM 17508 / OCM 812 / Nankai-3).